A 309-amino-acid chain; its full sequence is Homoserine O-succinyltransferase (309 aa).

The active-site Acyl-thioester intermediate is the Cys-142. The substrate site is built by Lys-163 and Ser-192. His-235 acts as the Proton acceptor in catalysis. The active site involves Glu-237. Arg-249 provides a ligand contact to substrate.

The protein belongs to the MetA family. In terms of assembly, homodimer.

It is found in the cytoplasm. It catalyses the reaction L-homoserine + succinyl-CoA = O-succinyl-L-homoserine + CoA. It participates in amino-acid biosynthesis; L-methionine biosynthesis via de novo pathway; O-succinyl-L-homoserine from L-homoserine: step 1/1. Functionally, transfers a succinyl group from succinyl-CoA to L-homoserine, forming succinyl-L-homoserine. This Salmonella arizonae (strain ATCC BAA-731 / CDC346-86 / RSK2980) protein is Homoserine O-succinyltransferase.